Here is a 257-residue protein sequence, read N- to C-terminus: Glucose-1-phosphate cytidylyltransferase (257 aa).

Residues 6 to 10 (LAGGL), 11 to 13 (GTR), Lys-23, Ser-104, Arg-109, and Gly-128 each bind substrate. Positions 129 and 234 each coordinate Mg(2+).

Belongs to the glucose-1-phosphate cytidylyltransferase family. Homohexamer. Mg(2+) is required as a cofactor.

The catalysed reaction is alpha-D-glucose 1-phosphate + CTP + H(+) = CDP-D-glucose + diphosphate. The protein operates within nucleotide-sugar biosynthesis; CDP-3,6-dideoxy-D-mannose biosynthesis; CDP-3,6-dideoxy-D-mannose from CTP and alpha-D-glucose 1-phosphate: step 1/5. Its pathway is bacterial outer membrane biogenesis; LPS O-antigen biosynthesis. Its function is as follows. Involved in the biosynthesis of the tyvelose, a 3,6-dideoxyhexose found in the O-antigen of the surface lipopolysaccharides. It catalyzes the transfer of a CMP moiety from CTP to glucose 1-phosphate. This enzyme can utilize either CTP or UTP as the nucleotide donor. The protein is Glucose-1-phosphate cytidylyltransferase (rfbF) of Salmonella typhi.